The chain runs to 460 residues: Kynureninase (460 aa).

Pyridoxal 5'-phosphate is bound by residues leucine 127, threonine 128, 165-168 (FPSD), aspartate 249, histidine 252, and tyrosine 274. Lysine 275 is subject to N6-(pyridoxal phosphate)lysine. Pyridoxal 5'-phosphate contacts are provided by tryptophan 304 and asparagine 332.

It belongs to the kynureninase family. In terms of assembly, homodimer. The cofactor is pyridoxal 5'-phosphate.

The protein resides in the cytoplasm. The enzyme catalyses L-kynurenine + H2O = anthranilate + L-alanine + H(+). The catalysed reaction is 3-hydroxy-L-kynurenine + H2O = 3-hydroxyanthranilate + L-alanine + H(+). The protein operates within amino-acid degradation; L-kynurenine degradation; L-alanine and anthranilate from L-kynurenine: step 1/1. It functions in the pathway cofactor biosynthesis; NAD(+) biosynthesis; quinolinate from L-kynurenine: step 2/3. Catalyzes the cleavage of L-kynurenine (L-Kyn) and L-3-hydroxykynurenine (L-3OHKyn) into anthranilic acid (AA) and 3-hydroxyanthranilic acid (3-OHAA), respectively. This chain is Kynureninase, found in Monosiga brevicollis (Choanoflagellate).